The sequence spans 345 residues: N(4)-(Beta-N-acetylglucosaminyl)-L-asparaginase (345 aa).

The N-terminal stretch at 1–23 is a signal peptide; that stretch reads MARKWNLPFLLLPLVLGIPLVRG. Asn38 carries N-linked (GlcNAc...) asparagine glycosylation. A disulfide bond links Cys64 and Cys69. N-linked (GlcNAc...) asparagine glycosylation is present at Asn149. A disulfide bridge links Cys163 with Cys179. Catalysis depends on Thr205, which acts as the Nucleophile. Substrate is bound by residues 233–236 and 256–259; these read RVGD and TGDG. Cys285 and Cys305 form a disulfide bridge. Asn307 is a glycosylation site (N-linked (GlcNAc...) asparagine). Cys316 and Cys344 form a disulfide bridge.

Belongs to the Ntn-hydrolase family. As to quaternary structure, heterotetramer of two alpha and two beta chains arranged as a dimer of alpha/beta heterodimers. Post-translationally, N-glycosylated. Cleaved into an alpha and beta chain by autocatalysis; this activates the enzyme. The N-terminal residue of the beta subunit is responsible for the nucleophile hydrolase activity.

It localises to the lysosome. It catalyses the reaction N(4)-(beta-N-acetyl-D-glucosaminyl)-L-asparagine + H2O = N-acetyl-beta-D-glucosaminylamine + L-aspartate + H(+). In terms of biological role, cleaves the GlcNAc-Asn bond which joins oligosaccharides to the peptide of asparagine-linked glycoproteins. This chain is N(4)-(Beta-N-acetylglucosaminyl)-L-asparaginase (Aga), found in Rattus norvegicus (Rat).